Here is a 199-residue protein sequence, read N- to C-terminus: Recombination protein RecR (199 aa).

Residues 57–72 (CPICGNITEKEICDIC) form a C4-type zinc finger. The 97-residue stretch at 80–176 (TTIMVVEQPK…KVTRLAAGLS (97 aa)) folds into the Toprim domain.

The protein belongs to the RecR family.

In terms of biological role, may play a role in DNA repair. It seems to be involved in an RecBC-independent recombinational process of DNA repair. It may act with RecF and RecO. The protein is Recombination protein RecR of Lactobacillus acidophilus (strain ATCC 700396 / NCK56 / N2 / NCFM).